The chain runs to 152 residues: Methylglyoxal synthase (152 aa).

An MGS-like domain is found at 1–152 (MELTTRTIAA…YDRYLQQRLK (152 aa)). Substrate contacts are provided by residues histidine 19, lysine 23, 45–48 (TGTT), and 65–66 (SG). Aspartate 71 serves as the catalytic Proton donor/acceptor. Residue histidine 98 participates in substrate binding.

It belongs to the methylglyoxal synthase family.

The enzyme catalyses dihydroxyacetone phosphate = methylglyoxal + phosphate. Functionally, catalyzes the formation of methylglyoxal from dihydroxyacetone phosphate. The protein is Methylglyoxal synthase of Yersinia enterocolitica serotype O:8 / biotype 1B (strain NCTC 13174 / 8081).